The primary structure comprises 170 residues: Large ribosomal subunit protein uL15 (170 aa).

The span at 1-12 (MKLHDLRPAEGA) shows a compositional bias: basic and acidic residues. The interval 1–52 (MKLHDLRPAEGAHRKRKRIGRGHGSGKGKTGGKGMMGQKARSGPGPYRTFEG) is disordered. A compositionally biased stretch (basic residues) spans 13 to 26 (HRKRKRIGRGHGSG).

The protein belongs to the universal ribosomal protein uL15 family. As to quaternary structure, part of the 50S ribosomal subunit.

Functionally, binds to the 23S rRNA. This is Large ribosomal subunit protein uL15 from Chloroflexus aurantiacus (strain ATCC 29366 / DSM 635 / J-10-fl).